The sequence spans 285 residues: Acetyl-coenzyme A carboxylase carboxyl transferase subunit beta (285 aa).

Positions glycine 24 to alanine 285 constitute a CoA carboxyltransferase N-terminal domain.

This sequence belongs to the AccD/PCCB family. As to quaternary structure, acetyl-CoA carboxylase is a heterohexamer composed of biotin carboxyl carrier protein (AccB), biotin carboxylase (AccC) and two subunits each of ACCase subunit alpha (AccA) and ACCase subunit beta (AccD).

It is found in the cytoplasm. The enzyme catalyses N(6)-carboxybiotinyl-L-lysyl-[protein] + acetyl-CoA = N(6)-biotinyl-L-lysyl-[protein] + malonyl-CoA. The protein operates within lipid metabolism; malonyl-CoA biosynthesis; malonyl-CoA from acetyl-CoA: step 1/1. In terms of biological role, component of the acetyl coenzyme A carboxylase (ACC) complex. Biotin carboxylase (BC) catalyzes the carboxylation of biotin on its carrier protein (BCCP) and then the CO(2) group is transferred by the transcarboxylase to acetyl-CoA to form malonyl-CoA. The chain is Acetyl-coenzyme A carboxylase carboxyl transferase subunit beta from Christiangramia forsetii (strain DSM 17595 / CGMCC 1.15422 / KT0803) (Gramella forsetii).